The following is a 728-amino-acid chain: Tripartite terminase subunit 1 (728 aa).

The C3H1-type zinc finger occupies 186 to 214 (CASCFAEAAMLPNQGESVLSMLAAVNCNH). A disordered region spans residues 239-278 (ARAAGRAGGGRESERRGREDADDEEDDEEEPRDGQGDAGD). The span at 247–257 (GGRESERRGRE) shows a compositional bias: basic and acidic residues. The segment covering 258 to 269 (DADDEEDDEEEP) has biased composition (acidic residues). 653-660 (YNRVWEKS) is an ATP binding site.

Belongs to the herpesviridae TRM1 protein family. Associates with TRM2 and TRM3 to form the tripartite terminase complex. Interacts with portal protein.

The protein resides in the host nucleus. In terms of biological role, component of the molecular motor that translocates viral genomic DNA in empty capsid during DNA packaging. Forms a tripartite terminase complex together with TRM2 and TRM3 in the host cytoplasm. Once the complex reaches the host nucleus, it interacts with the capsid portal vertex. This portal forms a ring in which genomic DNA is translocated into the capsid. TRM1 carries an endonuclease activity that plays an important role for the cleavage of concatemeric viral DNA into unit length genomes. This is Tripartite terminase subunit 1 from Equine herpesvirus 2 (strain 86/87) (EHV-2).